The sequence spans 386 residues: Galactokinase (386 aa).

Residue 32–35 (EHTD) coordinates substrate. ATP-binding positions include S66 and 123-129 (GASLSSS). Residues S129 and E161 each contribute to the Mg(2+) site. Residue D173 is the Proton acceptor of the active site. Y223 is a binding site for substrate.

The protein belongs to the GHMP kinase family. GalK subfamily.

It is found in the cytoplasm. The catalysed reaction is alpha-D-galactose + ATP = alpha-D-galactose 1-phosphate + ADP + H(+). Its pathway is carbohydrate metabolism; galactose metabolism. Functionally, catalyzes the transfer of the gamma-phosphate of ATP to D-galactose to form alpha-D-galactose-1-phosphate (Gal-1-P). This Staphylococcus saprophyticus subsp. saprophyticus (strain ATCC 15305 / DSM 20229 / NCIMB 8711 / NCTC 7292 / S-41) protein is Galactokinase.